The sequence spans 458 residues: UDP-N-acetylmuramoylalanine--D-glutamate ligase (458 aa).

118 to 124 (GTNGKTT) lines the ATP pocket.

Belongs to the MurCDEF family.

The protein localises to the cytoplasm. It carries out the reaction UDP-N-acetyl-alpha-D-muramoyl-L-alanine + D-glutamate + ATP = UDP-N-acetyl-alpha-D-muramoyl-L-alanyl-D-glutamate + ADP + phosphate + H(+). The protein operates within cell wall biogenesis; peptidoglycan biosynthesis. Cell wall formation. Catalyzes the addition of glutamate to the nucleotide precursor UDP-N-acetylmuramoyl-L-alanine (UMA). The chain is UDP-N-acetylmuramoylalanine--D-glutamate ligase from Ligilactobacillus salivarius (strain UCC118) (Lactobacillus salivarius).